The primary structure comprises 486 residues: Chromosomal replication initiator protein DnaA (486 aa).

The tract at residues Met1–Thr79 is domain I, interacts with DnaA modulators. The domain II stretch occupies residues Thr79–Pro141. Residues Phe142–Ile358 form a domain III, AAA+ region region. Positions 186, 188, 189, and 190 each coordinate ATP. The tract at residues Asp359 to Asn486 is domain IV, binds dsDNA.

Belongs to the DnaA family. Oligomerizes as a right-handed, spiral filament on DNA at oriC.

It is found in the cytoplasm. Plays an essential role in the initiation and regulation of chromosomal replication. ATP-DnaA binds to the origin of replication (oriC) to initiate formation of the DNA replication initiation complex once per cell cycle. Binds the DnaA box (a 9 base pair repeat at the origin) and separates the double-stranded (ds)DNA. Forms a right-handed helical filament on oriC DNA; dsDNA binds to the exterior of the filament while single-stranded (ss)DNA is stabiized in the filament's interior. The ATP-DnaA-oriC complex binds and stabilizes one strand of the AT-rich DNA unwinding element (DUE), permitting loading of DNA polymerase. After initiation quickly degrades to an ADP-DnaA complex that is not apt for DNA replication. Binds acidic phospholipids. Its function is as follows. Binds to the bpuR promoter, possibly at 5'-TTTTTAAA-3'. This chain is Chromosomal replication initiator protein DnaA, found in Borreliella burgdorferi (strain ATCC 35210 / DSM 4680 / CIP 102532 / B31) (Borrelia burgdorferi).